Reading from the N-terminus, the 61-residue chain is Large ribosomal subunit protein bL32 (61 aa).

The segment covering 1-16 (MAVPKRKTSPSRRGMR) has biased composition (basic residues). Residues 1 to 61 (MAVPKRKTSP…RQILKPKAEA (61 aa)) are disordered. Over residues 28–44 (VEDKDSGELRRPHHLDL) the composition is skewed to basic and acidic residues.

Belongs to the bacterial ribosomal protein bL32 family.

This is Large ribosomal subunit protein bL32 from Xanthobacter autotrophicus (strain ATCC BAA-1158 / Py2).